Here is a 320-residue protein sequence, read N- to C-terminus: Olfactory receptor 2AT4 (320 aa).

At 1–31 (MDATACNESVDGSPVFYLLGIPSLPETFFLP) the chain is on the extracellular side. Asparagine 7 carries N-linked (GlcNAc...) asparagine glycosylation. A helical transmembrane segment spans residues 32-52 (VFFIFLLFYLLILMGNALILV). Residues 53 to 62 (AVVAEPSLHK) are Cytoplasmic-facing. A helical membrane pass occupies residues 63–83 (PMYFFLINLSTLDILFTTTTV). Residues 84–102 (PKMLSLFLLGDRFLSFSSC) are Extracellular-facing. A disulfide bridge connects residues cysteine 102 and cysteine 184. Residues 103 to 123 (LLQMYLFQSFTCSEAFILVVM) traverse the membrane as a helical segment. Over 124–145 (AYDRYVAICHPLHYPVLMNPQT) the chain is Cytoplasmic. The helical transmembrane segment at 146-166 (NATLAASAWLTALLLPIPAVV) threads the bilayer. Residues 167–200 (RTSQMAYNSIAYIYHCFCDHLAVVQASCSDTTPQ) are Extracellular-facing. The helical transmembrane segment at 201 to 221 (TLMGFCIAMVVSFLPLLLVLL) threads the bilayer. Residues 222–245 (SYVHILASVLRISSLEGRAKAFST) lie on the Cytoplasmic side of the membrane. Residues 246 to 266 (CSSHLLVVGTYYSSIAIAYVA) form a helical membrane-spanning segment. The Extracellular portion of the chain corresponds to 267–276 (YRADLPLDFH). Residues 277 to 297 (IMGNVVYAILTPILNPLIYTL) form a helical membrane-spanning segment. Topologically, residues 298–320 (RNRDVKAAITKIMSQDPGCDRSI) are cytoplasmic.

Belongs to the G-protein coupled receptor 1 family. In terms of tissue distribution, detected in the keratinocytes of the epidermis (at protein level). Detected in hair follicles in proximal outer root sheath and hair matrix keratinocytes (at protein level).

Its subcellular location is the cell membrane. In terms of biological role, olfactory receptor. Activated by the synthetic sandalwood odorant sandalore. Endogenous ligand is unknown. The activity of this receptor is probably mediated by G proteins which induce elevation of intracellular Ca(2+), a cAMP-dependent pathway and phosphorylation of MAPK1/ERK2, MAPK3/ERK1 and p38 MAPKs. Activation of OR2AT4 induces proliferation, migration, and re-epithelialization during wound-healing processes of keratinocytes. Stimulation of OR2AT4 by sandalore promotes hair growth by decreasing apoptosis and increasing production of the anagen-prolonging growth factor IGF1 as well as other pathways involving various kinases. This Homo sapiens (Human) protein is Olfactory receptor 2AT4.